A 319-amino-acid chain; its full sequence is Ribosomal RNA large subunit methyltransferase F (319 aa).

The protein belongs to the methyltransferase superfamily. METTL16/RlmF family.

The protein resides in the cytoplasm. It carries out the reaction adenosine(1618) in 23S rRNA + S-adenosyl-L-methionine = N(6)-methyladenosine(1618) in 23S rRNA + S-adenosyl-L-homocysteine + H(+). Specifically methylates the adenine in position 1618 of 23S rRNA. In Aliivibrio fischeri (strain ATCC 700601 / ES114) (Vibrio fischeri), this protein is Ribosomal RNA large subunit methyltransferase F.